The chain runs to 1340 residues: Early transcription factor large subunit homolog (1340 aa).

The protein localises to the virion. Its function is as follows. Putative initation factor. The polypeptide is Early transcription factor large subunit homolog (Ornithodoros (relapsing fever ticks)).